The chain runs to 103 residues: MSMLQQVSVAKKANVYFNGKVISRSVVLADGSKQTFGVVLPGEYEFSTAQGEIMQVISGKFDVLLPGKTEWVAYAEASQFELAPNVSFSIRTDQISEYCCQYI.

It belongs to the nucleoside phosphorylase PpnP family.

It catalyses the reaction a purine D-ribonucleoside + phosphate = a purine nucleobase + alpha-D-ribose 1-phosphate. It carries out the reaction adenosine + phosphate = alpha-D-ribose 1-phosphate + adenine. The enzyme catalyses cytidine + phosphate = cytosine + alpha-D-ribose 1-phosphate. The catalysed reaction is guanosine + phosphate = alpha-D-ribose 1-phosphate + guanine. It catalyses the reaction inosine + phosphate = alpha-D-ribose 1-phosphate + hypoxanthine. It carries out the reaction thymidine + phosphate = 2-deoxy-alpha-D-ribose 1-phosphate + thymine. The enzyme catalyses uridine + phosphate = alpha-D-ribose 1-phosphate + uracil. The catalysed reaction is xanthosine + phosphate = alpha-D-ribose 1-phosphate + xanthine. Catalyzes the phosphorolysis of diverse nucleosides, yielding D-ribose 1-phosphate and the respective free bases. Can use uridine, adenosine, guanosine, cytidine, thymidine, inosine and xanthosine as substrates. Also catalyzes the reverse reactions. The sequence is that of Pyrimidine/purine nucleoside phosphorylase from Shewanella frigidimarina (strain NCIMB 400).